Reading from the N-terminus, the 140-residue chain is Large-conductance mechanosensitive channel (140 aa).

2 helical membrane passes run 11-31 and 82-102; these read FAMR…GAFG and GNFI…FLLV.

Belongs to the MscL family. Homopentamer.

The protein localises to the cell inner membrane. In terms of biological role, channel that opens in response to stretch forces in the membrane lipid bilayer. May participate in the regulation of osmotic pressure changes within the cell. The sequence is that of Large-conductance mechanosensitive channel from Parabacteroides distasonis (strain ATCC 8503 / DSM 20701 / CIP 104284 / JCM 5825 / NCTC 11152).